Here is a 350-residue protein sequence, read N- to C-terminus: Protein RecA (350 aa).

Residue 66–73 (GPESSGKT) coordinates ATP.

It belongs to the RecA family.

It localises to the cytoplasm. Can catalyze the hydrolysis of ATP in the presence of single-stranded DNA, the ATP-dependent uptake of single-stranded DNA by duplex DNA, and the ATP-dependent hybridization of homologous single-stranded DNAs. It interacts with LexA causing its activation and leading to its autocatalytic cleavage. The polypeptide is Protein RecA (Dichelobacter nodosus (strain VCS1703A)).